The sequence spans 508 residues: tRNA(Ile2) 2-agmatinylcytidine synthetase TiaS (508 aa).

A DNA-binding region (OB) is located at residues 367-427; it reads ITGGHVLIEL…YQLNIEKINV (61 aa).

This sequence belongs to the TiaS family.

Its subcellular location is the cytoplasm. The catalysed reaction is cytidine(34) in tRNA(Ile2) + agmatine + ATP + H2O = 2-agmatinylcytidine(34) in tRNA(Ile2) + AMP + 2 phosphate + 2 H(+). Functionally, ATP-dependent agmatine transferase that catalyzes the formation of 2-agmatinylcytidine (agm2C) at the wobble position (C34) of tRNA(Ile2), converting the codon specificity from AUG to AUA. The protein is tRNA(Ile2) 2-agmatinylcytidine synthetase TiaS of Methanococcus voltae (strain ATCC BAA-1334 / A3).